We begin with the raw amino-acid sequence, 246 residues long: tRNA (guanine-N(1)-)-methyltransferase (246 aa).

S-adenosyl-L-methionine-binding positions include Gly-117 and 137 to 142; that span reads IGDYVL.

This sequence belongs to the RNA methyltransferase TrmD family. In terms of assembly, homodimer.

It localises to the cytoplasm. The enzyme catalyses guanosine(37) in tRNA + S-adenosyl-L-methionine = N(1)-methylguanosine(37) in tRNA + S-adenosyl-L-homocysteine + H(+). Its function is as follows. Specifically methylates guanosine-37 in various tRNAs. This is tRNA (guanine-N(1)-)-methyltransferase from Acinetobacter baumannii (strain AB307-0294).